A 175-amino-acid chain; its full sequence is Early E1A protein (175 aa).

Residues 40-48 (PSLHDLFDL) are interaction with RB1 in competition with E2F1. The LXCXE motif, interaction with host RB1 motif lies at 106–110 (LLCLE). A zinc finger spans residues 146 to 164 (CLRCAYYQEQGENSICGLC).

The protein belongs to the adenoviridae E1A protein family. In terms of assembly, interacts with host UBE2I; this interaction interferes with polySUMOylation. Interacts with host RB1; this interaction induces the aberrant dissociation of RB1-E2F1 complex thereby disrupting the activity of RB1 and activating E2F1-regulated genes. Interacts with host ATF7; the interaction enhances ATF7-mediated viral transactivation activity which requires the zinc binding domains of both proteins. Isoform early E1A 32 kDa protein and isoform early E1A 26 kDa protein interact (via N-terminus) with CUL1 and E3 ubiquitin ligase RBX1; these interactions inhibit RBX1-CUL1-dependent elongation reaction of ubiquitin chains and attenuate ubiquitination of SCF(FBXW7) target proteins. Interacts (via PXLXP motif) with host ZMYND11/BS69 (via MYND-type zinc finger); this interaction inhibits E1A mediated transactivation. Interacts with host EP300; this interaction stimulates the acetylation of RB1 by recruiting EP300 and RB1 into a multimeric-protein complex. Interacts with host CTBP1 and CTBP2; this interaction seems to potentiate viral replication. Interacts with host DCAF7. Interacts with host DYRK1A. Interacts with host KPNA4; this interaction allows E1A import into the host nucleus. Interacts with host EP400; this interaction stabilizes MYC. Interacts with host TBP protein; this interaction probably disrupts the TBP-TATA complex.

The protein localises to the host nucleus. Plays a role in viral genome replication by driving entry of quiescent cells into the cell cycle. Stimulation of progression from G1 to S phase allows the virus to efficiently use the cellular DNA replicating machinery to achieve viral genome replication. E1A protein has both transforming and trans-activating activities. Induces the disassembly of the E2F1 transcription factor from RB1 by direct competition for the same binding site on RB1, with subsequent transcriptional activation of E2F1-regulated S-phase genes and of the E2 region of the adenoviral genome. Release of E2F1 leads to the ARF-mediated inhibition of MDM2 and causes TP53/p53 to accumulate because it is not targeted for degradation by MDM2-mediated ubiquitination anymore. This increase in TP53, in turn, would arrest the cell proliferation and direct its death but this effect is counteracted by the viral protein E1B-55K. Inactivation of the ability of RB1 to arrest the cell cycle is critical for cellular transformation, uncontrolled cellular growth and proliferation induced by viral infection. Interaction with RBX1 and CUL1 inhibits ubiquitination of the proteins targeted by SCF(FBXW7) ubiquitin ligase complex, and may be linked to unregulated host cell proliferation. The tumorigenesis-restraining activity of E1A may be related to the disruption of the host CtBP-CtIP complex through the CtBP binding motif. The sequence is that of Early E1A protein from Canis lupus familiaris (Dog).